A 102-amino-acid polypeptide reads, in one-letter code: Malonate decarboxylase acyl carrier protein (102 aa).

Ser27 bears the O-(phosphoribosyl dephospho-coenzyme A)serine mark.

It belongs to the MdcC family. Post-translationally, covalently binds the prosthetic group of malonate decarboxylase.

Its subcellular location is the cytoplasm. Functionally, subunit of malonate decarboxylase, it is an acyl carrier protein to which acetyl and malonyl thioester residues are bound via a 2'-(5''-phosphoribosyl)-3'-dephospho-CoA prosthetic group and turn over during the catalytic mechanism. This Acinetobacter calcoaceticus protein is Malonate decarboxylase acyl carrier protein.